Here is a 932-residue protein sequence, read N- to C-terminus: Lon protease homolog 2, peroxisomal (932 aa).

One can recognise a Lon N-terminal domain in the interval 11 to 260; that stretch reads LSLVPLPKGS…RVVDILNKQN (250 aa). A disordered region spans residues 298–328; it reads RRGIPGASGTPPPGLGGRNNEADEKESNELD. The segment covering 317–328 has biased composition (basic and acidic residues); sequence NEADEKESNELD. ATP is bound at residue 486–493; that stretch reads GPPGTGKT. Residues 729 to 916 form the Lon proteolytic domain; that stretch reads HGRPGVVTGL…WEAIRHIWPD (188 aa). Catalysis depends on residues serine 822 and lysine 865. The Microbody targeting signal signature appears at 930–932; sequence SRL.

It belongs to the peptidase S16 family.

The protein resides in the peroxisome matrix. The enzyme catalyses Hydrolysis of proteins in presence of ATP.. Its function is as follows. ATP-dependent serine protease that mediates the selective degradation of misfolded and unassembled polypeptides in the peroxisomal matrix. Necessary for type 2 peroxisome targeting signal (PTS2)-containing protein processing and facilitates peroxisome matrix protein import. This chain is Lon protease homolog 2, peroxisomal, found in Emericella nidulans (strain FGSC A4 / ATCC 38163 / CBS 112.46 / NRRL 194 / M139) (Aspergillus nidulans).